We begin with the raw amino-acid sequence, 347 residues long: Phenylalanine--tRNA ligase alpha subunit (347 aa).

E261 serves as a coordination point for Mg(2+).

This sequence belongs to the class-II aminoacyl-tRNA synthetase family. Phe-tRNA synthetase alpha subunit type 1 subfamily. Tetramer of two alpha and two beta subunits. The cofactor is Mg(2+).

It is found in the cytoplasm. The enzyme catalyses tRNA(Phe) + L-phenylalanine + ATP = L-phenylalanyl-tRNA(Phe) + AMP + diphosphate + H(+). In Streptococcus pyogenes serotype M18 (strain MGAS8232), this protein is Phenylalanine--tRNA ligase alpha subunit.